Consider the following 261-residue polypeptide: Small ribosomal subunit protein mS23 (261 aa).

The tract at residues 233 to 261 is disordered; that stretch reads RASSPSASWTNETEEEQKPIDQDVEEIQL.

It belongs to the mitochondrion-specific ribosomal protein mS23 family. As to quaternary structure, component of the mitochondrial small ribosomal subunit.

The protein localises to the mitochondrion. In Kluyveromyces lactis (strain ATCC 8585 / CBS 2359 / DSM 70799 / NBRC 1267 / NRRL Y-1140 / WM37) (Yeast), this protein is Small ribosomal subunit protein mS23 (RSM25).